We begin with the raw amino-acid sequence, 151 residues long: UPF0178 protein CPS_3584 (151 aa).

This sequence belongs to the UPF0178 family.

This is UPF0178 protein CPS_3584 from Colwellia psychrerythraea (strain 34H / ATCC BAA-681) (Vibrio psychroerythus).